Here is a 554-residue protein sequence, read N- to C-terminus: 2-succinyl-5-enolpyruvyl-6-hydroxy-3-cyclohexene-1-carboxylate synthase (554 aa).

It belongs to the TPP enzyme family. MenD subfamily. In terms of assembly, homodimer. Requires Mg(2+) as cofactor. Mn(2+) serves as cofactor. Thiamine diphosphate is required as a cofactor.

The catalysed reaction is isochorismate + 2-oxoglutarate + H(+) = 5-enolpyruvoyl-6-hydroxy-2-succinyl-cyclohex-3-ene-1-carboxylate + CO2. It functions in the pathway quinol/quinone metabolism; 1,4-dihydroxy-2-naphthoate biosynthesis; 1,4-dihydroxy-2-naphthoate from chorismate: step 2/7. The protein operates within quinol/quinone metabolism; menaquinone biosynthesis. Functionally, catalyzes the thiamine diphosphate-dependent decarboxylation of 2-oxoglutarate and the subsequent addition of the resulting succinic semialdehyde-thiamine pyrophosphate anion to isochorismate to yield 2-succinyl-5-enolpyruvyl-6-hydroxy-3-cyclohexene-1-carboxylate (SEPHCHC). The polypeptide is 2-succinyl-5-enolpyruvyl-6-hydroxy-3-cyclohexene-1-carboxylate synthase (Flavobacterium johnsoniae (strain ATCC 17061 / DSM 2064 / JCM 8514 / BCRC 14874 / CCUG 350202 / NBRC 14942 / NCIMB 11054 / UW101) (Cytophaga johnsonae)).